Reading from the N-terminus, the 360-residue chain is 3-dehydroquinate synthase (360 aa).

Residues 70–75, 128–129, Lys141, and Lys150 contribute to the NAD(+) site; these read DGESLK and TT. Residues Glu182, His243, and His259 each contribute to the Zn(2+) site.

The protein belongs to the sugar phosphate cyclases superfamily. Dehydroquinate synthase family. NAD(+) serves as cofactor. Requires Co(2+) as cofactor. Zn(2+) is required as a cofactor.

The protein resides in the cytoplasm. It carries out the reaction 7-phospho-2-dehydro-3-deoxy-D-arabino-heptonate = 3-dehydroquinate + phosphate. The protein operates within metabolic intermediate biosynthesis; chorismate biosynthesis; chorismate from D-erythrose 4-phosphate and phosphoenolpyruvate: step 2/7. In terms of biological role, catalyzes the conversion of 3-deoxy-D-arabino-heptulosonate 7-phosphate (DAHP) to dehydroquinate (DHQ). The polypeptide is 3-dehydroquinate synthase (Thermoplasma volcanium (strain ATCC 51530 / DSM 4299 / JCM 9571 / NBRC 15438 / GSS1)).